Consider the following 234-residue polypeptide: MKTVNVHGFEASSKEEFQVIQSSLVKRIKLISDFKEEDIKLCAGVDLAYWTKGEKQYGVCCIIVIDYNTGEIIEKAYDYGEIEVPYMPGFLAFRELPLVIKTVKKLKNEPDIFMFDGNGYLHYNHMGIATHASFFLNKPTIGVAKSYLKVAGVDFEMPESFEGAFKDIVINEEVYGRVLRTKKDVKPIFVSCGNYIDLETCTKICSKLINNDSRLPITVRLADLETHKRRSELS.

Asp-46 and Asp-116 together coordinate Mg(2+).

This sequence belongs to the endonuclease V family. Requires Mg(2+) as cofactor.

The protein resides in the cytoplasm. It carries out the reaction Endonucleolytic cleavage at apurinic or apyrimidinic sites to products with a 5'-phosphate.. Its function is as follows. DNA repair enzyme involved in the repair of deaminated bases. Selectively cleaves double-stranded DNA at the second phosphodiester bond 3' to a deoxyinosine leaving behind the intact lesion on the nicked DNA. This Clostridium acetobutylicum (strain ATCC 824 / DSM 792 / JCM 1419 / IAM 19013 / LMG 5710 / NBRC 13948 / NRRL B-527 / VKM B-1787 / 2291 / W) protein is Endonuclease V.